The sequence spans 169 residues: Succinate dehydrogenase cytochrome b560 subunit, mitochondrial (169 aa).

A mitochondrion-targeting transit peptide spans 1-29 (MAAFLLRHVSRHCLRAHLNAQLCIRNAAP). The Mitochondrial matrix segment spans residues 30–62 (LGTTAKEEMERFWKKNTSSNRPLSPHLTIYKWS). Residues 63–92 (LPMALSVCHRGSGIALSGGVSLFGLSALLL) form a helical membrane-spanning segment. Over 93–112 (PGNFESYLMFVKSLCLGPTL) the chain is Mitochondrial intermembrane. A helical membrane pass occupies residues 113–137 (IYSAKFVLVFPLMYHSLNGIRHLLW). Residue His-127 participates in heme b binding. Topologically, residues 138 to 144 (DLGKGLA) are mitochondrial matrix. The helical transmembrane segment at 145–166 (IPQVWLSGVAVVVLAVLSSGGL) threads the bilayer. Topologically, residues 167-169 (AAL) are mitochondrial intermembrane.

The protein belongs to the cytochrome b560 family. In terms of assembly, component of complex II composed of four subunits: the flavoprotein (FP) SDHA, iron-sulfur protein (IP) SDHB, and a cytochrome b560 composed of SDHC and SDHD. It depends on heme b as a cofactor.

It is found in the mitochondrion inner membrane. It functions in the pathway carbohydrate metabolism; tricarboxylic acid cycle. In terms of biological role, membrane-anchoring subunit of succinate dehydrogenase (SDH) that is involved in complex II of the mitochondrial electron transport chain and is responsible for transferring electrons from succinate to ubiquinone (coenzyme Q). SDH also oxidizes malate to the non-canonical enol form of oxaloacetate, enol-oxaloacetate. Enol-oxaloacetate, which is a potent inhibitor of the succinate dehydrogenase activity, is further isomerized into keto-oxaloacetate. The protein is Succinate dehydrogenase cytochrome b560 subunit, mitochondrial (Sdhc) of Mus musculus (Mouse).